The chain runs to 306 residues: Pantothenate kinase (306 aa).

ATP is bound at residue 91-98 (GSVAVGKS).

Belongs to the prokaryotic pantothenate kinase family.

Its subcellular location is the cytoplasm. It carries out the reaction (R)-pantothenate + ATP = (R)-4'-phosphopantothenate + ADP + H(+). It functions in the pathway cofactor biosynthesis; coenzyme A biosynthesis; CoA from (R)-pantothenate: step 1/5. The polypeptide is Pantothenate kinase (Streptococcus pneumoniae serotype 19F (strain G54)).